We begin with the raw amino-acid sequence, 130 residues long: Small ribosomal subunit protein uS9 (130 aa).

Belongs to the universal ribosomal protein uS9 family.

The chain is Small ribosomal subunit protein uS9 from Anaeromyxobacter dehalogenans (strain 2CP-1 / ATCC BAA-258).